The following is a 366-amino-acid chain: Inhibin alpha chain (366 aa).

Residues methionine 1–serine 20 form the signal peptide. The propeptide occupies cysteine 21–arginine 63. Positions histidine 64–arginine 233 are cleaved as a propeptide — inhibin alpha N-terminal region. Residues asparagine 147 and asparagine 269 are each glycosylated (N-linked (GlcNAc...) asparagine). 3 disulfides stabilise this stretch: cysteine 263–cysteine 328, cysteine 292–cysteine 363, and cysteine 296–cysteine 365.

Belongs to the TGF-beta family. As to quaternary structure, dimeric, linked by one or more disulfide bonds. Activin B is a dimer of alpha and beta-B. Inhibin A is a dimer of alpha and beta-A. Inhibin B is a dimer of alpha and beta-B. Interacts with TGFBR3L; this interaction regulates female fertility. Proteolytic processing yields a number of bioactive forms, consisting either solely of the mature alpha chain, of the most N-terminal propeptide linked through a disulfide bond to the mature alpha chain, or of the entire proprotein.

The protein resides in the secreted. Inhibins and activins inhibit and activate, respectively, the secretion of follitropin by the pituitary gland. Inhibins/activins are involved in regulating a number of diverse functions such as hypothalamic and pituitary hormone secretion, gonadal hormone secretion, germ cell development and maturation, erythroid differentiation, insulin secretion, nerve cell survival, embryonic axial development or bone growth, depending on their subunit composition. Inhibins appear to oppose the functions of activins. In terms of biological role, inhibin A is a dimer of alpha/INHA and beta-A/INHBA that functions as a feedback regulator in the hypothalamic-pituitary-gonadal (HPG) axis. Inhibits the secretion of FSH from the anterior pituitary gland by acting on pituitary gonadotrope cells. Antagonizes activin A by binding to the proteoglycan, betaglycan, and forming a stable complex with and, thereby, sequestering type II activin receptors while excluding type I receptor. Its function is as follows. Inhibin B is a dimer of alpha and beta-B that plays a crucial role in the regulation of the reproductive system by inhibiting the secretion of follicle-stimulating hormone (FSH) from the anterior pituitary gland. Thereby, maintains reproductive homeostasis in both males and females. Acts as a more potent suppressor of FSH release than inhibin A. Functions as competitive receptor antagonist binding activin type II receptors with high affinity in the presence of the TGF-beta type III coreceptor/TGFBR3L. The chain is Inhibin alpha chain (Inha) from Mus musculus (Mouse).